Consider the following 735-residue polypeptide: Phosphoribosylformylglycinamidine synthase subunit PurL (735 aa).

H44 is a catalytic residue. 2 residues coordinate ATP: Y47 and K86. E88 serves as a coordination point for Mg(2+). Residues 89–92 (SHNH) and R111 each bind substrate. The active-site Proton acceptor is the H90. A Mg(2+)-binding site is contributed by D112. Q240 contributes to the substrate binding site. D268 serves as a coordination point for Mg(2+). Residue 312-314 (ESQ) participates in substrate binding. Positions 496 and 533 each coordinate ATP. Position 534 (N534) interacts with Mg(2+). Residue S536 participates in substrate binding.

The protein belongs to the FGAMS family. In terms of assembly, monomer. Part of the FGAM synthase complex composed of 1 PurL, 1 PurQ and 2 PurS subunits.

Its subcellular location is the cytoplasm. It carries out the reaction N(2)-formyl-N(1)-(5-phospho-beta-D-ribosyl)glycinamide + L-glutamine + ATP + H2O = 2-formamido-N(1)-(5-O-phospho-beta-D-ribosyl)acetamidine + L-glutamate + ADP + phosphate + H(+). Its pathway is purine metabolism; IMP biosynthesis via de novo pathway; 5-amino-1-(5-phospho-D-ribosyl)imidazole from N(2)-formyl-N(1)-(5-phospho-D-ribosyl)glycinamide: step 1/2. Functionally, part of the phosphoribosylformylglycinamidine synthase complex involved in the purines biosynthetic pathway. Catalyzes the ATP-dependent conversion of formylglycinamide ribonucleotide (FGAR) and glutamine to yield formylglycinamidine ribonucleotide (FGAM) and glutamate. The FGAM synthase complex is composed of three subunits. PurQ produces an ammonia molecule by converting glutamine to glutamate. PurL transfers the ammonia molecule to FGAR to form FGAM in an ATP-dependent manner. PurS interacts with PurQ and PurL and is thought to assist in the transfer of the ammonia molecule from PurQ to PurL. The chain is Phosphoribosylformylglycinamidine synthase subunit PurL from Nitratiruptor sp. (strain SB155-2).